The following is a 305-amino-acid chain: tRNA pseudouridine synthase B (305 aa).

D48 serves as the catalytic Nucleophile.

It belongs to the pseudouridine synthase TruB family. Type 1 subfamily.

It carries out the reaction uridine(55) in tRNA = pseudouridine(55) in tRNA. Its function is as follows. Responsible for synthesis of pseudouridine from uracil-55 in the psi GC loop of transfer RNAs. This Pseudomonas putida (strain ATCC 700007 / DSM 6899 / JCM 31910 / BCRC 17059 / LMG 24140 / F1) protein is tRNA pseudouridine synthase B.